The chain runs to 50 residues: Sperm protamine P1 (50 aa).

This sequence belongs to the protamine P1 family. In terms of tissue distribution, testis.

Its subcellular location is the nucleus. The protein resides in the chromosome. Functionally, protamines substitute for histones in the chromatin of sperm during the haploid phase of spermatogenesis. They compact sperm DNA into a highly condensed, stable and inactive complex. This Natalus stramineus (Mexican funnel-eared bat) protein is Sperm protamine P1 (PRM1).